Here is a 459-residue protein sequence, read N- to C-terminus: Elongation factor 1-alpha 2 (459 aa).

Positions 5-242 (KTHINIVVIG…DCIIPPQRPT (238 aa)) constitute a tr-type G domain. The G1 stretch occupies residues 14-21 (GHVDSGKS). The tract at residues 70 to 74 (GITID) is G2. The tract at residues 91 to 94 (DAPG) is G3. Residues 153-156 (NKMD) form a G4 region. The segment at 194 to 196 (SGF) is G5. A 5-glutamyl glycerylphosphorylethanolamine mark is found at E301 and E374.

Belongs to the TRAFAC class translation factor GTPase superfamily. Classic translation factor GTPase family. EF-Tu/EF-1A subfamily.

It localises to the cytoplasm. This protein promotes the GTP-dependent binding of aminoacyl-tRNA to the A-site of ribosomes during protein biosynthesis. The sequence is that of Elongation factor 1-alpha 2 (eft-2) from Oscheius tipulae.